The following is a 447-amino-acid chain: UDP-N-acetylmuramate--L-alanine ligase (447 aa).

Residue 115-121 (GAHGKTS) coordinates ATP.

The protein belongs to the MurCDEF family.

It localises to the cytoplasm. It carries out the reaction UDP-N-acetyl-alpha-D-muramate + L-alanine + ATP = UDP-N-acetyl-alpha-D-muramoyl-L-alanine + ADP + phosphate + H(+). Its pathway is cell wall biogenesis; peptidoglycan biosynthesis. Cell wall formation. This chain is UDP-N-acetylmuramate--L-alanine ligase, found in Streptococcus thermophilus (strain CNRZ 1066).